A 60-amino-acid chain; its full sequence is Large ribosomal subunit protein uL30 (60 aa).

Belongs to the universal ribosomal protein uL30 family. Part of the 50S ribosomal subunit.

The sequence is that of Large ribosomal subunit protein uL30 from Polaromonas naphthalenivorans (strain CJ2).